Reading from the N-terminus, the 64-residue chain is Translation machinery-associated protein 7 homolog (64 aa).

The interval 1 to 64 (MSGREGGKKK…GGGIKKSGKK (64 aa)) is disordered. The span at 27–38 (MAFKQKQKEQQK) shows a compositional bias: basic and acidic residues. A coiled-coil region spans residues 27-50 (MAFKQKQKEQQKALEAAKANASKK). The segment covering 39–50 (ALEAAKANASKK) has biased composition (low complexity). A compositionally biased stretch (gly residues) spans 53 to 64 (LVGGGIKKSGKK).

This is Translation machinery-associated protein 7 homolog from Drosophila melanogaster (Fruit fly).